Consider the following 83-residue polypeptide: Small ribosomal subunit protein bS16 (83 aa).

This sequence belongs to the bacterial ribosomal protein bS16 family.

The chain is Small ribosomal subunit protein bS16 from Pseudomonas fluorescens (strain ATCC BAA-477 / NRRL B-23932 / Pf-5).